A 289-amino-acid chain; its full sequence is Acetyl-coenzyme A carboxylase carboxyl transferase subunit beta (289 aa).

In terms of domain architecture, CoA carboxyltransferase N-terminal spans 24 to 289 (LWTNCESCGQ…RQKTVSDAAA (266 aa)). 4 residues coordinate Zn(2+): Cys-28, Cys-31, Cys-47, and Cys-50. The C4-type zinc finger occupies 28–50 (CESCGQMMLTKELERSEKVCPHC).

It belongs to the AccD/PCCB family. As to quaternary structure, acetyl-CoA carboxylase is a heterohexamer composed of biotin carboxyl carrier protein (AccB), biotin carboxylase (AccC) and two subunits each of ACCase subunit alpha (AccA) and ACCase subunit beta (AccD). Requires Zn(2+) as cofactor.

The protein localises to the cytoplasm. It catalyses the reaction N(6)-carboxybiotinyl-L-lysyl-[protein] + acetyl-CoA = N(6)-biotinyl-L-lysyl-[protein] + malonyl-CoA. Its pathway is lipid metabolism; malonyl-CoA biosynthesis; malonyl-CoA from acetyl-CoA: step 1/1. In terms of biological role, component of the acetyl coenzyme A carboxylase (ACC) complex. Biotin carboxylase (BC) catalyzes the carboxylation of biotin on its carrier protein (BCCP) and then the CO(2) group is transferred by the transcarboxylase to acetyl-CoA to form malonyl-CoA. The sequence is that of Acetyl-coenzyme A carboxylase carboxyl transferase subunit beta from Gluconobacter oxydans (strain 621H) (Gluconobacter suboxydans).